We begin with the raw amino-acid sequence, 186 residues long: ATP synthase subunit delta (186 aa).

It belongs to the ATPase delta chain family. F-type ATPases have 2 components, F(1) - the catalytic core - and F(0) - the membrane proton channel. F(1) has five subunits: alpha(3), beta(3), gamma(1), delta(1), epsilon(1). F(0) has three main subunits: a(1), b(2) and c(10-14). The alpha and beta chains form an alternating ring which encloses part of the gamma chain. F(1) is attached to F(0) by a central stalk formed by the gamma and epsilon chains, while a peripheral stalk is formed by the delta and b chains.

The protein resides in the cell membrane. Its function is as follows. F(1)F(0) ATP synthase produces ATP from ADP in the presence of a proton or sodium gradient. F-type ATPases consist of two structural domains, F(1) containing the extramembraneous catalytic core and F(0) containing the membrane proton channel, linked together by a central stalk and a peripheral stalk. During catalysis, ATP synthesis in the catalytic domain of F(1) is coupled via a rotary mechanism of the central stalk subunits to proton translocation. This protein is part of the stalk that links CF(0) to CF(1). It either transmits conformational changes from CF(0) to CF(1) or is implicated in proton conduction. The protein is ATP synthase subunit delta of Wolbachia pipientis wMel.